The primary structure comprises 268 residues: Tropinone reductase homolog At2g29150 (268 aa).

An NADP(+)-binding site is contributed by 22–46 (LVTGGSKGLGEAVVEELAMLGARVH). Position 155 (serine 155) interacts with substrate. Catalysis depends on tyrosine 167, which acts as the Proton acceptor.

Belongs to the short-chain dehydrogenases/reductases (SDR) family. SDR65C subfamily.

Enantiospecific reductase active on cyclic monoterpenes and small flexible lipophilic carbonyls. No activity with tropinone, nitrogen-containing tropinone analogs, tropine or pseudotropine as substrate. This Arabidopsis thaliana (Mouse-ear cress) protein is Tropinone reductase homolog At2g29150.